A 146-amino-acid chain; its full sequence is Basic phospholipase A2 paradoxin-like alpha chain (146 aa).

Residues 1–27 form the signal peptide; that stretch reads MHPAHLLVLLAVCVSLLGASDIPPLPL. 7 cysteine pairs are disulfide-bonded: cysteine 38–cysteine 99, cysteine 54–cysteine 145, cysteine 56–cysteine 72, cysteine 71–cysteine 126, cysteine 78–cysteine 119, cysteine 88–cysteine 112, and cysteine 106–cysteine 117. Residues tyrosine 55, glycine 57, and glycine 59 each coordinate Ca(2+). Histidine 75 is a catalytic residue. Aspartate 76 contacts Ca(2+). Residue aspartate 120 is part of the active site.

Belongs to the phospholipase A2 family. Group I subfamily. D49 sub-subfamily. Heterotrimer of alpha, beta, and gamma chains; non-covalently linked. Ca(2+) serves as cofactor. Expressed by the venom gland.

The protein resides in the secreted. It carries out the reaction a 1,2-diacyl-sn-glycero-3-phosphocholine + H2O = a 1-acyl-sn-glycero-3-phosphocholine + a fatty acid + H(+). Its function is as follows. Heterotrimer: Snake venom phospholipase A2 (PLA2) heterotrimer that acts as a potent presynaptic neurotoxin by blocking synaptic transmission and synaptic vesicle recycling. May act by binding in a calcium-dependent fashion to neurotonal pentraxin-1 (NPTX1) and neurotonal pentraxin-2 (NPTX2), but not to neuronal pentraxin receptor (NPTXR). Also binds to taipoxin-associated calcium binding protein 49 (RCN2), a protein localized in the lumen of endoplasmic reticulum. Functionally, monomer (alpha chain): Snake venom phospholipase A2 (PLA2) alpha chain that possesses the same high enzymatic activity than the heterotrimer. PLA2 catalyzes the calcium-dependent hydrolysis of the 2-acyl groups in 3-sn-phosphoglycerides. This Oxyuranus microlepidotus (Inland taipan) protein is Basic phospholipase A2 paradoxin-like alpha chain.